A 608-amino-acid polypeptide reads, in one-letter code: Preterminal protein (608 aa).

The Nuclear localization signal motif lies at 338–347 (RLPMRRRRRR). The disordered stretch occupies residues 342–377 (RRRRRRAPPPPPMSEELSEPEVEAFPPASPPRRSFE). S536 bears the O-(5'-phospho-DNA)-serine mark.

Belongs to the adenoviridae terminal protein family. Heterodimer with the polymerase; this heterodimer binds to bp 9 to 18 of the genome. Interacts with host POU2F1; POU2F1 binds to the auxiliary sequences in the inverted terminal repeats and tethers the pTP-POL heterodimer to the origin DNA thereby participating in the assembly of the pre-initiation complex (POL-TP-DBP-NFIA-POU2F1). Preterminal protein is used to replicate viral genome, upon genomic encapsidation it is processed first into iTP and finally into TP by adenovirus protease.

The protein resides in the host nucleus matrix. Its function is as follows. Protein covalently bound to the viral DNA that acts as a primer for viral genomic replication by DNA strand displacement. Assembles on the viral origin of replication in an initiation complex with viral polymerase, DBP, host NFIA and host POU2F1/OCT1. During initiation, the polymerase covalently couples the first dCTP with Ser-580 of pTP. The terminal protein stimulates the template activity over 20 fold compared to protein-free templates. Neo-synthesized viral genomes are linked to two preterminal proteins, one for each 5' end. These new genomes are encapsidated in the nucleus, and during capsid maturation by viral protease, preterminal protein is first cleaved into intermediary (iTP), then into mature TP. May play a role in host nuclear matrix localization of genomic DNA. The chain is Preterminal protein from Canine adenovirus serotype 1 (strain CLL) (CAdV-1).